We begin with the raw amino-acid sequence, 445 residues long: Argininosuccinate synthase (445 aa).

ATP is bound by residues 17-25 (AFSGGLDTS) and alanine 43. Tyrosine 99 serves as a coordination point for L-citrulline. ATP is bound by residues glycine 129 and threonine 131. The L-aspartate site is built by threonine 131, asparagine 135, and aspartate 136. Asparagine 135 serves as a coordination point for L-citrulline. Residue aspartate 136 coordinates ATP. Positions 139 and 192 each coordinate L-citrulline. Aspartate 194 is an ATP binding site. Residues threonine 201, glutamate 203, and glutamate 280 each coordinate L-citrulline.

The protein belongs to the argininosuccinate synthase family. Type 2 subfamily. As to quaternary structure, homotetramer.

It is found in the cytoplasm. It catalyses the reaction L-citrulline + L-aspartate + ATP = 2-(N(omega)-L-arginino)succinate + AMP + diphosphate + H(+). The protein operates within amino-acid biosynthesis; L-arginine biosynthesis; L-arginine from L-ornithine and carbamoyl phosphate: step 2/3. The sequence is that of Argininosuccinate synthase from Gemmatimonas aurantiaca (strain DSM 14586 / JCM 11422 / NBRC 100505 / T-27).